The chain runs to 186 residues: Elongation factor P (186 aa).

Belongs to the elongation factor P family.

The protein localises to the cytoplasm. It functions in the pathway protein biosynthesis; polypeptide chain elongation. In terms of biological role, involved in peptide bond synthesis. Stimulates efficient translation and peptide-bond synthesis on native or reconstituted 70S ribosomes in vitro. Probably functions indirectly by altering the affinity of the ribosome for aminoacyl-tRNA, thus increasing their reactivity as acceptors for peptidyl transferase. This chain is Elongation factor P, found in Neisseria gonorrhoeae (strain ATCC 700825 / FA 1090).